The following is a 428-amino-acid chain: Putative zinc finger protein 355P (428 aa).

A KRAB domain is found at 1–64 (MRDEVAEKEK…KHPGLTQHNI (64 aa)). 3 C2H2-type zinc fingers span residues 72–94 (YKCK…QRIH), 100–122 (YKCE…MRAH), and 128–150 (YKCE…KRIH). The C2H2-type 4; degenerate zinc-finger motif lies at 156–178 (YKFEECDKAFYWVLSFTKHMIIH). The segment at 184–206 (YKYQECGKAFKWSSNLTIHKRIH) adopts a C2H2-type 5; degenerate zinc-finger fold. Residues 212 to 234 (CKCEECGKACKQSLGLTIQKRIH) form a C2H2-type 6; degenerate zinc finger. Residues 263 to 285 (YNCEKCGKAFYCSSNLIQNNIVH) form a C2H2-type 7; degenerate zinc finger. C2H2-type zinc fingers lie at residues 291-313 (YKCQ…KIIH) and 335-357 (YKCE…MIVH). A C2H2-type 10; degenerate zinc finger spans residues 363–385 (YKCEECGKAFKWSSELTIHQRIR). A C2H2-type 11 zinc finger spans residues 391–413 (YKCEECVRVFKHSSKLNEHKRNH).

It belongs to the krueppel C2H2-type zinc-finger protein family.

The protein resides in the nucleus. In terms of biological role, may be involved in transcriptional regulation. The sequence is that of Putative zinc finger protein 355P (ZNF355P) from Homo sapiens (Human).